A 614-amino-acid polypeptide reads, in one-letter code: BTB/POZ domain-containing protein At5g48800 (614 aa).

Residues 43-111 (SDITIEVNGG…CYGINFEITS (69 aa)) form the BTB domain. The 266-residue stretch at 219–484 (DWWIEDLSVL…VQVLYFEQLK (266 aa)) folds into the NPH3 domain. A Phosphotyrosine modification is found at Tyr-425. Disordered stretches follow at residues 492 to 525 (SYSDEEPKPKQQQQQSWRINSGALSATMSPKDNY) and 583 to 614 (GHSSSRGSSSPSKQSFRTDSKVLMERTCASTD). The segment covering 507-521 (SWRINSGALSATMSP) has biased composition (polar residues). A coiled-coil region spans residues 522 to 562 (KDNYASLRRENRELKLELARLRMRLNDLEKEHICMKRDMQR). Over residues 583-597 (GHSSSRGSSSPSKQS) the composition is skewed to low complexity.

It belongs to the NPH3 family.

It functions in the pathway protein modification; protein ubiquitination. Its function is as follows. May act as a substrate-specific adapter of an E3 ubiquitin-protein ligase complex (CUL3-RBX1-BTB) which mediates the ubiquitination and subsequent proteasomal degradation of target proteins. This chain is BTB/POZ domain-containing protein At5g48800, found in Arabidopsis thaliana (Mouse-ear cress).